A 189-amino-acid chain; its full sequence is HGPRTase-like protein 2 (189 aa).

The protein belongs to the purine/pyrimidine phosphoribosyltransferase family. Archaeal HPRT subfamily.

Its function is as follows. May catalyze a purine salvage reaction, the substrate is unknown. This Halalkalicoccus jeotgali (strain DSM 18796 / CECT 7217 / JCM 14584 / KCTC 4019 / B3) protein is HGPRTase-like protein 2.